Consider the following 368-residue polypeptide: Phospho-N-acetylmuramoyl-pentapeptide-transferase (368 aa).

The next 9 membrane-spanning stretches (helical) occupy residues 30–50 (AAAI…IRYL), 72–92 (LPTM…FLWA), 98–118 (HVWL…IDDY), 139–159 (ISLG…AVLL), 170–190 (LSID…TAVS), 201–221 (GLAS…SYLA), 238–258 (GGEI…FLWF), 264–286 (EIIM…ALLI), and 345–365 (KIVI…LMTL).

Belongs to the glycosyltransferase 4 family. MraY subfamily. Mg(2+) serves as cofactor.

It is found in the cell inner membrane. It carries out the reaction UDP-N-acetyl-alpha-D-muramoyl-L-alanyl-gamma-D-glutamyl-meso-2,6-diaminopimeloyl-D-alanyl-D-alanine + di-trans,octa-cis-undecaprenyl phosphate = di-trans,octa-cis-undecaprenyl diphospho-N-acetyl-alpha-D-muramoyl-L-alanyl-D-glutamyl-meso-2,6-diaminopimeloyl-D-alanyl-D-alanine + UMP. The protein operates within cell wall biogenesis; peptidoglycan biosynthesis. In terms of biological role, catalyzes the initial step of the lipid cycle reactions in the biosynthesis of the cell wall peptidoglycan: transfers peptidoglycan precursor phospho-MurNAc-pentapeptide from UDP-MurNAc-pentapeptide onto the lipid carrier undecaprenyl phosphate, yielding undecaprenyl-pyrophosphoryl-MurNAc-pentapeptide, known as lipid I. In Chlorobium phaeobacteroides (strain DSM 266 / SMG 266 / 2430), this protein is Phospho-N-acetylmuramoyl-pentapeptide-transferase.